A 315-amino-acid chain; its full sequence is Ribosomal protein L11 methyltransferase (315 aa).

S-adenosyl-L-methionine-binding residues include T162, G183, D205, and N248.

Belongs to the methyltransferase superfamily. PrmA family.

It is found in the cytoplasm. The enzyme catalyses L-lysyl-[protein] + 3 S-adenosyl-L-methionine = N(6),N(6),N(6)-trimethyl-L-lysyl-[protein] + 3 S-adenosyl-L-homocysteine + 3 H(+). In terms of biological role, methylates ribosomal protein L11. The polypeptide is Ribosomal protein L11 methyltransferase (Enterococcus faecalis (strain ATCC 700802 / V583)).